The following is a 206-amino-acid chain: Large ribosomal subunit protein uL4 (206 aa).

A disordered region spans residues 63–97 (MYKQKGTGRARHHSARAPQFRGGGKAHGPVVRSHE). A compositionally biased stretch (basic residues) spans 64–77 (YKQKGTGRARHHSA).

This sequence belongs to the universal ribosomal protein uL4 family. As to quaternary structure, part of the 50S ribosomal subunit.

Its function is as follows. One of the primary rRNA binding proteins, this protein initially binds near the 5'-end of the 23S rRNA. It is important during the early stages of 50S assembly. It makes multiple contacts with different domains of the 23S rRNA in the assembled 50S subunit and ribosome. Functionally, forms part of the polypeptide exit tunnel. The polypeptide is Large ribosomal subunit protein uL4 (Rhizobium etli (strain CIAT 652)).